Reading from the N-terminus, the 338-residue chain is LIX1-like protein (338 aa).

The tract at residues 1–65 (METMRAQRLQ…LLLAGAPGLP (65 aa)) is disordered. Positions 29 to 38 (TGAPTSAATP) are enriched in low complexity. Residues 39–56 (PAGPPPAPPPPAPPPPPL) are compositionally biased toward pro residues.

This sequence belongs to the LIX1 family.

The protein is LIX1-like protein (Lix1l) of Rattus norvegicus (Rat).